The sequence spans 147 residues: Large ribosomal subunit protein bL9 (147 aa).

Positions 44–63 are disordered; the sequence is VKTLDAQKRSEDKRKEQEKL. Residues 48–63 are compositionally biased toward basic and acidic residues; the sequence is DAQKRSEDKRKEQEKL.

Belongs to the bacterial ribosomal protein bL9 family.

Functionally, binds to the 23S rRNA. The chain is Large ribosomal subunit protein bL9 from Brevibacillus brevis (strain 47 / JCM 6285 / NBRC 100599).